The sequence spans 189 residues: Probable thymidylate kinase 1 (189 aa).

Position 9-16 (9-16 (GIDGSGKT)) interacts with ATP.

It belongs to the thymidylate kinase family.

The catalysed reaction is dTMP + ATP = dTDP + ADP. The sequence is that of Probable thymidylate kinase 1 (tmk1) from Saccharolobus solfataricus (strain ATCC 35092 / DSM 1617 / JCM 11322 / P2) (Sulfolobus solfataricus).